A 253-amino-acid polypeptide reads, in one-letter code: MTDTIANIKLQLKNTSPNDEQLLIWQQDKRVGVQNALKAWQKKQVMLREKREHFLSRFDIERQYWMQGYDLIAGVDEVGRGPLAGPVVAAAVILPHDFDVLDVIDSKQLSAKKRDELYDKIIEKAISIGVGRVEASIIDEINIYEAARVAMTEAVNQLAPIPEALLIDAMRLDLDLPQEFLIKGDARSNSIGAASIIAKVTRDRLMASYGLKYPGYGFEKNAGYGTKEHLEGIKKIGITPIHRKTFAPIKDIL.

The RNase H type-2 domain maps to Asp70–Leu253. A divalent metal cation contacts are provided by Asp76, Glu77, and Asp168.

This sequence belongs to the RNase HII family. Requires Mn(2+) as cofactor. The cofactor is Mg(2+).

The protein resides in the cytoplasm. It catalyses the reaction Endonucleolytic cleavage to 5'-phosphomonoester.. Endonuclease that specifically degrades the RNA of RNA-DNA hybrids. In Leuconostoc mesenteroides subsp. mesenteroides (strain ATCC 8293 / DSM 20343 / BCRC 11652 / CCM 1803 / JCM 6124 / NCDO 523 / NBRC 100496 / NCIMB 8023 / NCTC 12954 / NRRL B-1118 / 37Y), this protein is Ribonuclease HII.